Here is a 291-residue protein sequence, read N- to C-terminus: Phosphatidylserine decarboxylase proenzyme (291 aa).

Catalysis depends on charge relay system; for autoendoproteolytic cleavage activity residues Asp-90, His-147, and Ser-253. The Schiff-base intermediate with substrate; via pyruvic acid; for decarboxylase activity role is filled by Ser-253. Ser-253 bears the Pyruvic acid (Ser); by autocatalysis mark.

Belongs to the phosphatidylserine decarboxylase family. PSD-B subfamily. Prokaryotic type I sub-subfamily. As to quaternary structure, heterodimer of a large membrane-associated beta subunit and a small pyruvoyl-containing alpha subunit. Requires pyruvate as cofactor. In terms of processing, is synthesized initially as an inactive proenzyme. Formation of the active enzyme involves a self-maturation process in which the active site pyruvoyl group is generated from an internal serine residue via an autocatalytic post-translational modification. Two non-identical subunits are generated from the proenzyme in this reaction, and the pyruvate is formed at the N-terminus of the alpha chain, which is derived from the carboxyl end of the proenzyme. The autoendoproteolytic cleavage occurs by a canonical serine protease mechanism, in which the side chain hydroxyl group of the serine supplies its oxygen atom to form the C-terminus of the beta chain, while the remainder of the serine residue undergoes an oxidative deamination to produce ammonia and the pyruvoyl prosthetic group on the alpha chain. During this reaction, the Ser that is part of the protease active site of the proenzyme becomes the pyruvoyl prosthetic group, which constitutes an essential element of the active site of the mature decarboxylase.

It is found in the cell membrane. The enzyme catalyses a 1,2-diacyl-sn-glycero-3-phospho-L-serine + H(+) = a 1,2-diacyl-sn-glycero-3-phosphoethanolamine + CO2. Its pathway is phospholipid metabolism; phosphatidylethanolamine biosynthesis; phosphatidylethanolamine from CDP-diacylglycerol: step 2/2. In terms of biological role, catalyzes the formation of phosphatidylethanolamine (PtdEtn) from phosphatidylserine (PtdSer). The sequence is that of Phosphatidylserine decarboxylase proenzyme from Photobacterium profundum (strain SS9).